A 321-amino-acid chain; its full sequence is Sphingolipid delta(4)-desaturase DES1 (321 aa).

Transmembrane regions (helical) follow at residues 41-61 (PNFK…LFVV), 68-88 (WLIV…MLAV), 107-127 (ILGF…FKKY), 157-177 (FGKF…PLII), 187-206 (IINT…FLGW), and 208-230 (PLAY…GHFI).

Belongs to the fatty acid desaturase type 1 family. DEGS subfamily. In terms of tissue distribution, testes.

It is found in the endoplasmic reticulum membrane. It localises to the membrane. The protein localises to the mitochondrion. It carries out the reaction an N-acylsphinganine + 2 Fe(II)-[cytochrome b5] + O2 + 2 H(+) = an N-acylsphing-4-enine + 2 Fe(III)-[cytochrome b5] + 2 H2O. The catalysed reaction is an N-acyleicosasphinganine + 2 Fe(II)-[cytochrome b5] + O2 + 2 H(+) = an N-acyleicosasphing-4-enine + 2 Fe(III)-[cytochrome b5] + 2 H2O. It functions in the pathway sphingolipid metabolism. Has sphingolipid-delta-4-desaturase activity. Converts sphinganine-containing sphingolipids (such as N-acylsphinganines or dihydroceramides) into sphingolipids containing the delta-4-desaturated sphingoid base (E)-sphing-4-enine (such as N-acylsphing-4-enines or ceramides), which are required for many different functions (structural functions as well as signaling). Required to initiate spermatid differentiation among other signals. Required for central spindle assembly and cytokinesis during male meiosis, may act as part of an anchoring mechanism that links membrane-bounded cellular compartments to components of the cytoskeleton. This is Sphingolipid delta(4)-desaturase DES1 from Drosophila melanogaster (Fruit fly).